The sequence spans 126 residues: NADPH-dependent 7-cyano-7-deazaguanine reductase (126 aa).

C40 (thioimide intermediate) is an active-site residue. The active-site Proton donor is the D47. Substrate contacts are provided by residues 62–64 (IEL) and 81–82 (HE).

It belongs to the GTP cyclohydrolase I family. QueF type 1 subfamily.

It is found in the cytoplasm. The enzyme catalyses 7-aminomethyl-7-carbaguanine + 2 NADP(+) = 7-cyano-7-deazaguanine + 2 NADPH + 3 H(+). It participates in tRNA modification; tRNA-queuosine biosynthesis. Functionally, catalyzes the NADPH-dependent reduction of 7-cyano-7-deazaguanine (preQ0) to 7-aminomethyl-7-deazaguanine (preQ1). This chain is NADPH-dependent 7-cyano-7-deazaguanine reductase, found in Campylobacter jejuni subsp. doylei (strain ATCC BAA-1458 / RM4099 / 269.97).